A 278-amino-acid polypeptide reads, in one-letter code: NADPH-dependent 7-cyano-7-deazaguanine reductase (278 aa).

Position 87–89 (87–89 (IES)) interacts with substrate. NADPH is bound at residue 89 to 90 (SK). Residue Cys-185 is the Thioimide intermediate of the active site. Asp-192 functions as the Proton donor in the catalytic mechanism. Substrate is bound at residue 224–225 (HE). An NADPH-binding site is contributed by 253 to 254 (RG). A disordered region spans residues 255–278 (GLDINPYRSTNPTFSVQNHRSFRQ). A compositionally biased stretch (polar residues) spans 261–278 (YRSTNPTFSVQNHRSFRQ).

This sequence belongs to the GTP cyclohydrolase I family. QueF type 2 subfamily. In terms of assembly, homodimer.

The protein resides in the cytoplasm. It carries out the reaction 7-aminomethyl-7-carbaguanine + 2 NADP(+) = 7-cyano-7-deazaguanine + 2 NADPH + 3 H(+). It participates in tRNA modification; tRNA-queuosine biosynthesis. Its function is as follows. Catalyzes the NADPH-dependent reduction of 7-cyano-7-deazaguanine (preQ0) to 7-aminomethyl-7-deazaguanine (preQ1). The chain is NADPH-dependent 7-cyano-7-deazaguanine reductase from Coxiella burnetii (strain Dugway 5J108-111).